A 464-amino-acid chain; its full sequence is MIIRDIMEDPENEGPHNMRSDFEPLLSVLRLRDYETGDIIEFDSTEASEEALSDITEFGSTEASEAHFEEPYSARIKKVEKEINELAEKICNLGIKESDTGLAPPNQWDLVSDKQMMQEEQPLLVATCTQIISPNTEDAKYVVDIKKIGKYVVGLGDKASPTDIEAGMRVGVDQKKYQIQIPLPPKIDPSVTMMTVEEKPDATYSDIGGCKEQIEKIREVVELPMLHPEKFVRLGIDPPKGVLCYGPPGSGKTLVARAVANRTGACFIRVVGSELVQKYIGEGARMVRELFQMARSKKACILFFDEIDAIGGARFDDGVGSDNEVQRTMLEILYQLDGFDARGNIKVLMATNRPDILDPALLRPGRLDRKVEFCLPDLEGRTQIFKIHTRTMSCERDIRFELLAGLCPNSTGADIRSVCIEAGMYAIGARRKSVTEKDFLDAVNKVVKGYQKFSATPKYMAYYI.

Residue 246–253 (GPPGSGKT) coordinates ATP. A Glycyl lysine isopeptide (Lys-Gly) (interchain with G-Cter in ubiquitin) cross-link involves residue Lys-452.

It belongs to the AAA ATPase family. In terms of assembly, component of the 19S regulatory particle (RP/PA700) base subcomplex of the 26S proteasome. The 26S proteasome is composed of a core protease (CP), known as the 20S proteasome, capped at one or both ends by the 19S regulatory particle (RP/PA700). The RP/PA700 complex is composed of at least 17 different subunits in two subcomplexes, the base and the lid, which form the portions proximal and distal to the 20S proteolytic core, respectively.

The protein resides in the cytoplasm. Its subcellular location is the nucleus. Functionally, the 26S proteasome is involved in the ATP-dependent degradation of ubiquitinated proteins. The regulatory (or ATPase) complex confers ATP dependency and substrate specificity to the 26S complex. This Arabidopsis thaliana (Mouse-ear cress) protein is 26S proteasome regulatory subunit 7 homolog B (RPT1B).